The following is a 346-amino-acid chain: Heterogeneous nuclear ribonucleoprotein A2 homolog 1 (346 aa).

RRM domains are found at residues 9 to 92 and 100 to 179; these read RKLF…ESAK and KKLF…LSKQ. Disordered stretches follow at residues 182 to 217 and 326 to 346; these read QDVQNTRNNRGGNFGFGDSRGGGNFGSGPGGNFRGG and NYGPGNASGGNGGGYGGRNRY. Positions 193–217 are enriched in gly residues; the sequence is GNFGFGDSRGGGNFGSGPGGNFRGG. A nuclear targeting sequence region spans residues 297–340; that stretch reads QQSSNYGPMKSGGNFGGNRSMGGGPYGGGNYGPGNASGGNGGGY.

It localises to the nucleus. Its function is as follows. Forms complexes (ribonucleosomes) with at least 20 other different hnRNP and heterogeneous nuclear RNA in the nucleus. This is Heterogeneous nuclear ribonucleoprotein A2 homolog 1 from Xenopus laevis (African clawed frog).